A 1119-amino-acid polypeptide reads, in one-letter code: Multiple epidermal growth factor-like domains protein 10 (1119 aa).

A signal peptide spans methionine 1 to serine 22. The Extracellular portion of the chain corresponds to leucine 23–glycine 851. The EMI domain occupies aspartate 27 to proline 104. 15 disulfides stabilise this stretch: cysteine 31–cysteine 92, cysteine 57–cysteine 66, cysteine 91–cysteine 102, cysteine 102–cysteine 115, cysteine 106–cysteine 121, cysteine 123–cysteine 132, cysteine 145–cysteine 157, cysteine 151–cysteine 164, cysteine 166–cysteine 175, cysteine 188–cysteine 200, cysteine 194–cysteine 207, cysteine 209–cysteine 218, cysteine 231–cysteine 243, cysteine 237–cysteine 250, and cysteine 252–cysteine 260. EGF-like domains are found at residues serine 98 to serine 133, tryptophan 141 to glutamate 176, tyrosine 184 to glutamate 219, and histidine 227 to glycine 261. An N-linked (GlcNAc...) asparagine glycan is attached at asparagine 197. N-linked (GlcNAc...) asparagine glycosylation is present at asparagine 272. EGF-like domains are found at residues serine 274–glutamine 304 and tyrosine 312–glutamate 347. 6 cysteine pairs are disulfide-bonded: cysteine 277–cysteine 285, cysteine 279–cysteine 292, cysteine 294–cysteine 303, cysteine 316–cysteine 328, cysteine 322–cysteine 335, and cysteine 337–cysteine 346. Asparagine 369 and asparagine 393 each carry an N-linked (GlcNAc...) asparagine glycan. 9 consecutive EGF-like domains span residues tyrosine 401–alanine 436, tyrosine 444–serine 479, tryptophan 487–aspartate 522, tryptophan 573–glutamine 608, phenylalanine 616–asparagine 653, glycine 666–serine 696, isoleucine 709–threonine 739, tyrosine 747–glutamate 782, and arginine 795–aspartate 825. 3 disulfide bridges follow: cysteine 405/cysteine 417, cysteine 411/cysteine 424, and cysteine 426/cysteine 435. An N-linked (GlcNAc...) asparagine glycan is attached at asparagine 447. 6 cysteine pairs are disulfide-bonded: cysteine 448/cysteine 460, cysteine 454/cysteine 467, cysteine 469/cysteine 478, cysteine 491/cysteine 503, cysteine 497/cysteine 510, and cysteine 512/cysteine 521. The N-linked (GlcNAc...) asparagine glycan is linked to asparagine 492. A glycan (N-linked (GlcNAc...) asparagine) is linked at asparagine 576. Cystine bridges form between cysteine 577–cysteine 589, cysteine 583–cysteine 596, cysteine 598–cysteine 607, cysteine 620–cysteine 634, cysteine 624–cysteine 641, cysteine 643–cysteine 652, cysteine 669–cysteine 677, cysteine 671–cysteine 684, cysteine 686–cysteine 695, cysteine 712–cysteine 720, cysteine 714–cysteine 727, cysteine 729–cysteine 738, cysteine 751–cysteine 763, cysteine 757–cysteine 770, cysteine 772–cysteine 781, cysteine 798–cysteine 806, cysteine 800–cysteine 813, and cysteine 815–cysteine 824. Asparagine 674 carries an N-linked (GlcNAc...) asparagine glycan. A glycan (N-linked (GlcNAc...) asparagine) is linked at asparagine 803. Residues alanine 852–isoleucine 872 traverse the membrane as a helical segment. The Cytoplasmic portion of the chain corresponds to tyrosine 873 to lysine 1119.

It belongs to the MEGF family.

Its subcellular location is the cell membrane. In terms of biological role, membrane receptor involved in phagocytosis by macrophages and astrocytes of apoptotic cells. Essential factor in the regulation of muscle development including myogenesis. Likely plays a key role in muscle cell proliferation, adhesion and motility. May control the balance between skeletal muscle satellite cells proliferation and differentiation through regulation of the notch signaling pathway. The polypeptide is Multiple epidermal growth factor-like domains protein 10 (Danio rerio (Zebrafish)).